The primary structure comprises 316 residues: Pantothenate kinase (316 aa).

Residue 95–102 (GSVAVGKS) participates in ATP binding.

Belongs to the prokaryotic pantothenate kinase family.

The protein localises to the cytoplasm. The catalysed reaction is (R)-pantothenate + ATP = (R)-4'-phosphopantothenate + ADP + H(+). Its pathway is cofactor biosynthesis; coenzyme A biosynthesis; CoA from (R)-pantothenate: step 1/5. The sequence is that of Pantothenate kinase from Salmonella agona (strain SL483).